Consider the following 227-residue polypeptide: UPF0173 metal-dependent hydrolase BCAH820_4729 (227 aa).

The protein belongs to the UPF0173 family.

The sequence is that of UPF0173 metal-dependent hydrolase BCAH820_4729 from Bacillus cereus (strain AH820).